A 578-amino-acid polypeptide reads, in one-letter code: Proline--tRNA ligase (578 aa).

Belongs to the class-II aminoacyl-tRNA synthetase family. ProS type 1 subfamily. As to quaternary structure, homodimer.

Its subcellular location is the cytoplasm. It catalyses the reaction tRNA(Pro) + L-proline + ATP = L-prolyl-tRNA(Pro) + AMP + diphosphate. Functionally, catalyzes the attachment of proline to tRNA(Pro) in a two-step reaction: proline is first activated by ATP to form Pro-AMP and then transferred to the acceptor end of tRNA(Pro). As ProRS can inadvertently accommodate and process non-cognate amino acids such as alanine and cysteine, to avoid such errors it has two additional distinct editing activities against alanine. One activity is designated as 'pretransfer' editing and involves the tRNA(Pro)-independent hydrolysis of activated Ala-AMP. The other activity is designated 'posttransfer' editing and involves deacylation of mischarged Ala-tRNA(Pro). The misacylated Cys-tRNA(Pro) is not edited by ProRS. This Burkholderia cenocepacia (strain HI2424) protein is Proline--tRNA ligase.